A 713-amino-acid chain; its full sequence is Serine/threonine-protein kinase SSN3 (713 aa).

The Protein kinase domain maps to Tyr-66–Phe-484. Leu-72–Val-80 contacts ATP. Low complexity predominate over residues Asn-104–Thr-120. The interval Asn-104–Ser-188 is disordered. Over residues Gln-129–His-142 the composition is skewed to polar residues. Low complexity predominate over residues Gly-158–Ala-175. Lys-201 lines the ATP pocket. The active-site Proton acceptor is the Asp-304. Over residues Ser-657–Glu-672 the composition is skewed to polar residues. The segment at Ser-657–Asn-713 is disordered. Low complexity predominate over residues Ser-673 to Pro-691. The span at Arg-694–Asn-705 shows a compositional bias: polar residues.

It belongs to the protein kinase superfamily. CMGC Ser/Thr protein kinase family. CDC2/CDKX subfamily. Component of the srb8-11 complex, a regulatory module of the Mediator complex. Mg(2+) is required as a cofactor.

The protein localises to the nucleus. It catalyses the reaction L-seryl-[protein] + ATP = O-phospho-L-seryl-[protein] + ADP + H(+). The catalysed reaction is L-threonyl-[protein] + ATP = O-phospho-L-threonyl-[protein] + ADP + H(+). The enzyme catalyses [DNA-directed RNA polymerase] + ATP = phospho-[DNA-directed RNA polymerase] + ADP + H(+). Functionally, component of the srb8-11 complex. The srb8-11 complex is a regulatory module of the Mediator complex which is itself dependent transcription. The srb8-11 complex may be involved in the transcriptional repression of a subset of genes regulated by Mediator. It may inhibit the association of the Mediator complex with RNA polymerase II to form the holoenzyme complex. The srb8-11 complex phosphorylates the C-terminal domain (CTD) of the largest subunit of RNA polymerase II. The polypeptide is Serine/threonine-protein kinase SSN3 (SSN3) (Mycosarcoma maydis (Corn smut fungus)).